The sequence spans 377 residues: Nitric oxide reductase FlRd-NAD(+) reductase (377 aa).

This sequence belongs to the FAD-dependent oxidoreductase family. It depends on FAD as a cofactor.

It localises to the cytoplasm. The catalysed reaction is 2 reduced [nitric oxide reductase rubredoxin domain] + NAD(+) + H(+) = 2 oxidized [nitric oxide reductase rubredoxin domain] + NADH. It functions in the pathway nitrogen metabolism; nitric oxide reduction. Its function is as follows. One of at least two accessory proteins for anaerobic nitric oxide (NO) reductase. Reduces the rubredoxin moiety of NO reductase. This Escherichia coli (strain SMS-3-5 / SECEC) protein is Nitric oxide reductase FlRd-NAD(+) reductase.